The primary structure comprises 343 residues: Signal peptide peptidase 2 (343 aa).

Residues 1–19 are Lumenal-facing; it reads MKTHERAANLALAGLSLAP. A helical membrane pass occupies residues 20 to 40; that stretch reads LVVKVNPNANVILTACLAVYV. Topologically, residues 41 to 62 are cytoplasmic; it reads GCYRSVKPTPPAETMSKEHAMR. A helical transmembrane segment spans residues 63–83; sequence FPLVGSAMLLSLFLLFKFLSK. Residues 84–89 lie on the Lumenal side of the membrane; the sequence is DLVNTV. The helical transmembrane segment at 90 to 110 threads the bilayer; that stretch reads LTAYFFILGIAALCATLLPSI. Topologically, residues 111-141 are cytoplasmic; sequence KRFLPKEWNDNAIVWRAPLFHSLSVEFTRSQ. Residues 142–162 form a helical membrane-spanning segment; the sequence is VVASIPGFFFCIWYAAKKHWL. The Lumenal portion of the chain corresponds to 163–165; that stretch reads ANN. A helical transmembrane segment spans residues 166-186; that stretch reads VLGISFCIQGIEMLSLGSFKT. Over 187-188 the chain is Cytoplasmic; that stretch reads GA. A helical membrane pass occupies residues 189-209; that stretch reads ILLSGLFFYDIFWVFFTPVMV. The active site involves aspartate 198. Residues 210 to 230 lie on the Lumenal side of the membrane; it reads SVAKSFDAPIKLLFPTGDAAR. The chain crosses the membrane as a helical span at residues 231-251; the sequence is PFSMLGLGDIVIPGIFVALAL. Residue aspartate 239 is part of the active site. Residues 252-266 lie on the Cytoplasmic side of the membrane; the sequence is RFDVSRGIKNRYFNS. Residues 267–287 traverse the membrane as a helical segment; sequence AFLGYTVGLTVTIIVMNWFQA. At 288–290 the chain is on the lumenal side; sequence AQP. The short motif at 290 to 292 is the PAL element; it reads PAL. Residues 291–311 form a helical membrane-spanning segment; sequence ALLYIVPGVIGFVAVHCLWNG. The Cytoplasmic portion of the chain corresponds to 312-343; it reads EVKPLLEYNESKAEEEEACEEDTDSKQNKKKE. The span at 324–334 shows a compositional bias: acidic residues; that stretch reads AEEEEACEEDT. Residues 324-343 form a disordered region; that stretch reads AEEEEACEEDTDSKQNKKKE. Residues 340–343 carry the Endoplasmic reticulum targeting signal motif; the sequence is KKKE.

Belongs to the peptidase A22B family. Ubiquitous.

It is found in the endoplasmic reticulum membrane. Intramembrane-cleaving aspartic protease (I-CLiP) that cleaves type II membrane signal peptides in the hydrophobic plane of the membrane. Catalyzes intramembrane proteolysis of some signal peptides after they have been cleaved from a preprotein, resulting in the release of the fragment from the ER membrane into the cytoplasm. This Oryza sativa subsp. japonica (Rice) protein is Signal peptide peptidase 2 (SPP2).